We begin with the raw amino-acid sequence, 42 residues long: Aspartate-semialdehyde dehydrogenase leader peptide (42 aa).

This chain is Aspartate-semialdehyde dehydrogenase leader peptide, found in Streptococcus mutans serotype c (strain ATCC 700610 / UA159).